A 203-amino-acid polypeptide reads, in one-letter code: Small ribosomal subunit protein uS3 (203 aa).

Belongs to the universal ribosomal protein uS3 family. Part of the 30S ribosomal subunit. Forms a tight complex with proteins S10 and S14.

Binds the lower part of the 30S subunit head. Binds mRNA in the 70S ribosome, positioning it for translation. The chain is Small ribosomal subunit protein uS3 from Carsonella ruddii (strain PV).